The sequence spans 5207 residues: E3 ubiquitin-protein ligase RNF213 (5207 aa).

Disordered regions lie at residues 1-20 (MECP…FCSQ) and 27-365 (PAAP…EADV). The segment covering 34–43 (SENNNSTMAS) has biased composition (polar residues). Basic residues predominate over residues 89 to 100 (KKKKRKKKKKGN). Composition is skewed to low complexity over residues 101–117 (KSAS…PASP) and 136–157 (SQAQ…ATTP). Positions 188-197 (SEAQSSPQFQ) are enriched in polar residues. 2 positions are modified to phosphoserine: serine 208 and serine 217. Residues 248 to 266 (GGSSEPGTELQTTEQQAGA) show a composition bias toward polar residues. 3 stretches are compositionally biased toward basic and acidic residues: residues 285 to 294 (AGKEMKEKTQ), 309 to 346 (HCQE…EGKN), and 353 to 362 (KNEKEQKNQE). Residues 343–374 (EGKNRSAAAVKNEKEQKNQEADVQEVKASTLS) adopt a coiled-coil conformation. Lysine 1151 participates in a covalent cross-link: Glycyl lysine isopeptide (Lys-Gly) (interchain with G-Cter in SUMO2). A Phosphoserine modification is found at serine 1258. ATP is bound by residues 1995–2000 (GVGKSL), glutamate 2098, aspartate 2155, and arginine 2216. At serine 2273 the chain carries Phosphoserine. Positions 2499 and 2574 each coordinate ATP. The Zn(2+) site is built by cysteine 3997, cysteine 4000, cysteine 4012, histidine 4014, cysteine 4017, cysteine 4020, cysteine 4032, cysteine 4035, cysteine 4505, and histidine 4509. Residues 3997–4036 (CSICLGDAKDPVCLPCDHVHCLRCLRAWFASEQMICPYCL) form an RING-type zinc finger. The segment at 4483-4555 (MPEDLLAQAR…VKDKADRTQT (73 aa)) adopts an RZ-type zinc-finger fold. The active-site Nucleophile; for E3 ubiquitin-lipopolysaccharide ligase activity is cysteine 4516. Zn(2+) is bound by residues cysteine 4525 and cysteine 4528.

The protein belongs to the AAA ATPase family. As to quaternary structure, monomer. Interacts with UBE2L3/UBCH7; UBE2L3/UBCH7 is the most efficient ubiquitin-conjugating enzyme E2 for the ubiquitin ligase activity. Interacts with UBE2N/UBC13; promoting 'Lys-63'-linked ubiquitination of target proteins. In terms of assembly, (Microbial infection) Interacts with M.tuberculosis protein Rv3655c, which impairs caspase-8 activation and suppresses macrophage apoptosis by blocking the extrinsic pathway. Autoubiquitinated. Widely expressed (at protein level). As to expression, major isoform detected in all tissues examined. In terms of tissue distribution, minor isoform with restricted expression.

It localises to the cytoplasm. The protein resides in the cytosol. The protein localises to the lipid droplet. It catalyses the reaction S-ubiquitinyl-[E2 ubiquitin-conjugating enzyme]-L-cysteine + [acceptor protein]-L-lysine = [E2 ubiquitin-conjugating enzyme]-L-cysteine + N(6)-ubiquitinyl-[acceptor protein]-L-lysine.. The enzyme catalyses ATP + H2O = ADP + phosphate + H(+). Its pathway is protein modification; protein ubiquitination. Functionally, atypical E3 ubiquitin ligase that can catalyze ubiquitination of both proteins and lipids, and which is involved in various processes, such as lipid metabolism, angiogenesis and cell-autonomous immunity. Acts as a key immune sensor by catalyzing ubiquitination of the lipid A moiety of bacterial lipopolysaccharide (LPS) via its RZ-type zinc-finger: restricts the proliferation of cytosolic bacteria, such as Salmonella, by generating the bacterial ubiquitin coat through the ubiquitination of LPS. Also acts indirectly by mediating the recruitment of the LUBAC complex, which conjugates linear polyubiquitin chains. Ubiquitination of LPS triggers cell-autonomous immunity, such as antibacterial autophagy, leading to degradation of the microbial invader. Involved in lipid metabolism by regulating fat storage and lipid droplet formation; act by inhibiting the lipolytic process. Also regulates lipotoxicity by inhibiting desaturation of fatty acids. Also acts as an E3 ubiquitin-protein ligase via its RING-type zinc finger: mediates 'Lys-63'-linked ubiquitination of target proteins. Involved in the non-canonical Wnt signaling pathway in vascular development: acts by mediating ubiquitination and degradation of FLNA and NFATC2 downstream of RSPO3, leading to inhibit the non-canonical Wnt signaling pathway and promoting vessel regression. Also has ATPase activity; ATPase activity is required for ubiquitination of LPS. This Homo sapiens (Human) protein is E3 ubiquitin-protein ligase RNF213.